Reading from the N-terminus, the 141-residue chain is Cholinesterase (141 aa).

A glycan (N-linked (GlcNAc...) asparagine) is linked at asparagine 39. 49–50 contacts substrate; it reads GG. Serine 131 (acyl-ester intermediate) is an active-site residue. Position 131 is a phosphoserine (serine 131).

This sequence belongs to the type-B carboxylesterase/lipase family. Homotetramer; disulfide-linked. Dimer of dimers. Present in most cells except erythrocytes.

It is found in the secreted. It catalyses the reaction an acylcholine + H2O = a carboxylate + choline + H(+). Esterase with broad substrate specificity. Contributes to the inactivation of the neurotransmitter acetylcholine. Can degrade neurotoxic organophosphate esters. The sequence is that of Cholinesterase (BCHE) from Canis lupus familiaris (Dog).